The following is a 263-amino-acid chain: Acyl-[acyl-carrier-protein]--UDP-N-acetylglucosamine O-acyltransferase (263 aa).

It belongs to the transferase hexapeptide repeat family. LpxA subfamily. In terms of assembly, homotrimer.

It is found in the cytoplasm. It catalyses the reaction a (3R)-hydroxyacyl-[ACP] + UDP-N-acetyl-alpha-D-glucosamine = a UDP-3-O-[(3R)-3-hydroxyacyl]-N-acetyl-alpha-D-glucosamine + holo-[ACP]. Its pathway is glycolipid biosynthesis; lipid IV(A) biosynthesis; lipid IV(A) from (3R)-3-hydroxytetradecanoyl-[acyl-carrier-protein] and UDP-N-acetyl-alpha-D-glucosamine: step 1/6. Its function is as follows. Involved in the biosynthesis of lipid A, a phosphorylated glycolipid that anchors the lipopolysaccharide to the outer membrane of the cell. This is Acyl-[acyl-carrier-protein]--UDP-N-acetylglucosamine O-acyltransferase from Campylobacter jejuni subsp. doylei (strain ATCC BAA-1458 / RM4099 / 269.97).